The primary structure comprises 832 residues: Protein translocase subunit SecA (832 aa).

ATP is bound by residues Q87, 105-109, and D512; that span reads GEGKT.

It belongs to the SecA family. Monomer and homodimer. Part of the essential Sec protein translocation apparatus which comprises SecA, SecYEG and auxiliary proteins SecDF-YajC and YidC.

It is found in the cell membrane. It localises to the cytoplasm. The catalysed reaction is ATP + H2O + cellular proteinSide 1 = ADP + phosphate + cellular proteinSide 2.. Part of the Sec protein translocase complex. Interacts with the SecYEG preprotein conducting channel. Has a central role in coupling the hydrolysis of ATP to the transfer of proteins into and across the cell membrane, serving as an ATP-driven molecular motor driving the stepwise translocation of polypeptide chains across the membrane. This is Protein translocase subunit SecA from Wigglesworthia glossinidia brevipalpis.